The chain runs to 453 residues: Ribosomal protein uS12 methylthiotransferase RimO (453 aa).

The MTTase N-terminal domain occupies 5-120; the sequence is PKVGFVSLGC…VMQAVHSHLP (116 aa). Residues cysteine 14, cysteine 50, cysteine 79, cysteine 151, cysteine 155, and cysteine 158 each contribute to the [4Fe-4S] cluster site. Residues 137–382 form the Radical SAM core domain; sequence LTPRHYAYLK…MEVAEEVSAR (246 aa). In terms of domain architecture, TRAM spans 385 to 453; sequence ARKVGKTLKV…ADGHDLWGEV (69 aa).

It belongs to the methylthiotransferase family. RimO subfamily. The cofactor is [4Fe-4S] cluster.

The protein resides in the cytoplasm. It carries out the reaction L-aspartate(89)-[ribosomal protein uS12]-hydrogen + (sulfur carrier)-SH + AH2 + 2 S-adenosyl-L-methionine = 3-methylsulfanyl-L-aspartate(89)-[ribosomal protein uS12]-hydrogen + (sulfur carrier)-H + 5'-deoxyadenosine + L-methionine + A + S-adenosyl-L-homocysteine + 2 H(+). Its function is as follows. Catalyzes the methylthiolation of an aspartic acid residue of ribosomal protein uS12. The sequence is that of Ribosomal protein uS12 methylthiotransferase RimO from Burkholderia multivorans (strain ATCC 17616 / 249).